Reading from the N-terminus, the 78-residue chain is Large ribosomal subunit protein bL31 (78 aa).

It belongs to the bacterial ribosomal protein bL31 family. Type A subfamily. In terms of assembly, part of the 50S ribosomal subunit.

Its function is as follows. Binds the 23S rRNA. The polypeptide is Large ribosomal subunit protein bL31 (Rickettsia prowazekii (strain Madrid E)).